We begin with the raw amino-acid sequence, 256 residues long: Acetyl-coenzyme A carboxylase carboxyl transferase subunit alpha (256 aa).

The CoA carboxyltransferase C-terminal domain maps to 1-236 (MTDVARILKE…KSHLIDEITQ (236 aa)).

It belongs to the AccA family. As to quaternary structure, acetyl-CoA carboxylase is a heterohexamer composed of biotin carboxyl carrier protein (AccB), biotin carboxylase (AccC) and two subunits each of ACCase subunit alpha (AccA) and ACCase subunit beta (AccD).

Its subcellular location is the cytoplasm. The catalysed reaction is N(6)-carboxybiotinyl-L-lysyl-[protein] + acetyl-CoA = N(6)-biotinyl-L-lysyl-[protein] + malonyl-CoA. Its pathway is lipid metabolism; malonyl-CoA biosynthesis; malonyl-CoA from acetyl-CoA: step 1/1. In terms of biological role, component of the acetyl coenzyme A carboxylase (ACC) complex. First, biotin carboxylase catalyzes the carboxylation of biotin on its carrier protein (BCCP) and then the CO(2) group is transferred by the carboxyltransferase to acetyl-CoA to form malonyl-CoA. This chain is Acetyl-coenzyme A carboxylase carboxyl transferase subunit alpha, found in Streptococcus equi subsp. equi (strain 4047).